A 2212-amino-acid polypeptide reads, in one-letter code: Voltage-dependent P/Q-type calcium channel subunit alpha-1A (2212 aa).

At 1-100 the chain is on the cytoplasmic side; that stretch reads MARFGDEMPG…KYAKKITEWP (100 aa). Residues 87 to 365 form an I repeat; that stretch reads NVVRKYAKKI…LVLGVLSGEF (279 aa). Residues 101-119 form a helical membrane-spanning segment; that stretch reads PFEYMILATIIANCIVLAL. Residues 120–138 lie on the Extracellular side of the membrane; sequence EQHLPDDDKTPMSERLDDT. The chain crosses the membrane as a helical span at residues 139-156; the sequence is EPYFIGIFCFEAGIKIVA. The Cytoplasmic segment spans residues 157-168; sequence LGFAFHKGSYLR. Residues 169–184 traverse the membrane as a helical segment; that stretch reads NGWNVMDFVVVLTGIL. Residues 185–192 lie on the Extracellular side of the membrane; it reads ATVGTEFD. A helical membrane pass occupies residues 193 to 211; sequence LRTLRAVRVLRPLKLVSGI. The Cytoplasmic segment spans residues 212-230; the sequence is PSLQVVLKSIMKAMIPLLQ. The chain crosses the membrane as a helical span at residues 231 to 250; sequence IGLLLFFAILIFAIIGLEFY. The Extracellular segment spans residues 251–337; the sequence is MGKFHTTCFE…NSNDASGNTW (87 aa). The N-linked (GlcNAc...) asparagine glycan is linked to Asn285. Position 320 (Glu320) interacts with Ca(2+). The chain crosses the membrane as a helical span at residues 338–362; the sequence is NWLYFIPLIIIGSFFMLNLVLGVLS. At 363-489 the chain is on the cytoplasmic side; the sequence is GEFAKERERV…FYIRRMVKTQ (127 aa). The binding to the beta subunit stretch occupies residues 385–402; that stretch reads QQIERELNGYMEWISKAE. At Thr411 the chain carries Phosphothreonine. Phosphoserine occurs at positions 450 and 453. The stretch at 475 to 719 is one II repeat; that stretch reads ERRMRFYIRR…VFLAIAVDNL (245 aa). Residues 490–509 traverse the membrane as a helical segment; sequence AFYWTVLSLVALNTLWLAIV. Residues 510-523 lie on the Extracellular side of the membrane; that stretch reads HYNQPEWLSDFLYY. A helical membrane pass occupies residues 524 to 543; that stretch reads AEFIFLGLFMSEMFIKMYGL. Topologically, residues 544–551 are cytoplasmic; sequence GTRPYFHS. The helical transmembrane segment at 552-570 threads the bilayer; sequence SFNCFDCGVIIGSIFEVIW. Topologically, residues 571-580 are extracellular; the sequence is AVIKPGTSFG. A helical transmembrane segment spans residues 581-599; it reads ISVLRALRLLRIFKVTKYW. The Cytoplasmic portion of the chain corresponds to 600–618; that stretch reads ASLRNLVVSLLNSMKSIIS. A helical transmembrane segment spans residues 619-638; that stretch reads LLFLLFLFIVVFALLGMQLF. Residues 639-691 are Extracellular-facing; the sequence is GGQFNFDEGTPPTNFDTFPAAIMTVFQILTGEDWNEVMYDEIKSQGGVQGGMV. Position 670 (Glu670) interacts with Ca(2+). The chain crosses the membrane as a helical span at residues 692-716; that stretch reads FSIYFIVLTLFGNYTLLNVFLAIAV. At 717–1190 the chain is on the cytoplasmic side; that stretch reads DNLANAQELT…TNPLRRLCHY (474 aa). Phosphoserine is present on residues Ser752, Ser755, and Ser792. Composition is skewed to basic and acidic residues over residues 814 to 824, 850 to 862, 871 to 924, and 932 to 958; these read PDVKTHLDRPL, RPRE…DARR, APGR…EGEP, and RPGD…RAAD. 2 disordered regions span residues 814–1117 and 1137–1170; these read PDVK…RKPE and VNKN…KPMP. Ser1038, Ser1042, and Ser1051 each carry phosphoserine. Residues 1056-1073 are compositionally biased toward polar residues; sequence GNSTNPGPALATNPQNAA. Positions 1074 to 1083 are enriched in low complexity; the sequence is SRRTPNNPGN. Residues 1094-1111 show a composition bias toward polar residues; the sequence is ENSLIVTNPSSTQPNSAK. The segment covering 1153 to 1163 has biased composition (acidic residues); that stretch reads KKEEEEADPGE. An III repeat occupies 1182-1465; that stretch reads NPLRRLCHYI…IFVALIIITF (284 aa). A helical transmembrane segment spans residues 1191-1214; it reads ILNLRYFEMCILMVIAMSSIALAA. At 1215–1231 the chain is on the extracellular side; the sequence is EDPVQPNAPRNNVLRYF. A helical membrane pass occupies residues 1232–1251; sequence DYVFTGVFTFEMVIKMIDLG. The Cytoplasmic segment spans residues 1252–1258; that stretch reads LVLHQGA. The chain crosses the membrane as a helical span at residues 1259-1282; it reads YFRDLWNILDFIVVSGALVAFAFT. Residues 1283-1293 are Extracellular-facing; it reads GNSKGKDINTI. The chain crosses the membrane as a helical span at residues 1294–1311; that stretch reads KSLRVLRVLRPLKTIKRL. The Cytoplasmic portion of the chain corresponds to 1312–1330; the sequence is PKLKAVFDCVVNSLKNVFN. Residues 1331–1350 form a helical membrane-spanning segment; that stretch reads ILIVYMLFMFIFAVVAVQLF. Over 1351 to 1437 the chain is Extracellular; it reads KGKFFHCTDE…QGPSPGYRME (87 aa). Glu1411 contributes to the Ca(2+) binding site. A helical membrane pass occupies residues 1438-1462; the sequence is MSIFYVVYFVVFPFFFVNIFVALII. Topologically, residues 1463–1518 are cytoplasmic; that stretch reads ITFQEQGDKMMEEYSLEKNERACIDFAISAKPLTRHMPQNKQSFQYRMWQFVVSPP. Residues 1502–1765 form an IV repeat; sequence NKQSFQYRMW…LFVAVIMDNF (264 aa). A helical membrane pass occupies residues 1519–1537; the sequence is FEYTIMAMIALNTIVLMMK. The Extracellular segment spans residues 1538-1551; that stretch reads FYGASVAYENALRV. A helical transmembrane segment spans residues 1552-1573; that stretch reads FNIVFTSLFSLECVLKVMAFGI. At 1574-1580 the chain is on the cytoplasmic side; sequence LNYFRDA. A helical transmembrane segment spans residues 1581–1600; the sequence is WNIFDFVTVLGSITDILVTE. Residues 1601–1607 are Extracellular-facing; sequence FGNNFIN. Asn1607 carries N-linked (GlcNAc...) asparagine glycosylation. Residues 1608–1626 form a helical membrane-spanning segment; the sequence is LSFLRLFRAARLIKLLRQG. Over 1627-1645 the chain is Cytoplasmic; it reads YTIRILLWTFVQSFKALPY. A helical transmembrane segment spans residues 1646 to 1665; that stretch reads VCLLIAMLFFIYAIIGMQVF. Residues 1666–1737 lie on the Extracellular side of the membrane; sequence GNIGIDGEDE…IQKPECGNEF (72 aa). A helical transmembrane segment spans residues 1738–1763; the sequence is AYFYFVSFIFLCSFLMLNLFVAVIMD. The Cytoplasmic segment spans residues 1764–2212; that stretch reads NFEYLTRDSS…EGREHATHRQ (449 aa). A Phosphothreonine modification is found at Thr1935. Residues 1940–2212 are disordered; the sequence is QRMEPPSPTQ…EGREHATHRQ (273 aa). 2 stretches are compositionally biased toward polar residues: residues 1948-1963 and 1972-1997; these read TQEG…STQL and QESS…TGTW. 6 positions are modified to phosphoserine: Ser1998, Ser2016, Ser2028, Ser2030, Ser2071, and Ser2091. Residues 2008–2017 are compositionally biased toward polar residues; the sequence is PNSQPNSQSV. Residues 2018 to 2034 are compositionally biased toward basic and acidic residues; the sequence is EMREMGTDGYSDSEHYL. Positions 2064–2073 are enriched in polar residues; that stretch reads LSTISDTSPM. 2 stretches are compositionally biased toward basic and acidic residues: residues 2085-2102 and 2143-2153; these read RRLD…ENQR and PSKDRDQDRGR. The segment covering 2154-2172 has biased composition (basic residues); sequence PKDRKHRPHHHHHHHHHHP. Residues 2173–2212 are compositionally biased toward basic and acidic residues; that stretch reads PAPDRERYAQERPDTGRARAREQRWSRSPSEGREHATHRQ.

It belongs to the calcium channel alpha-1 subunit (TC 1.A.1.11) family. CACNA1A subfamily. Voltage-dependent calcium channels are multisubunit complexes, consisting of alpha-1, alpha-2, beta and delta subunits in a 1:1:1:1 ratio. The channel activity is directed by the pore-forming and voltage-sensitive alpha-1 subunit. In many cases, this subunit is sufficient to generate voltage-sensitive calcium channel activity. The auxiliary subunits beta and alpha-2/delta linked by a disulfide bridge regulate the channel activity. Interacts (via C-terminal CDB motif) with CABP1 in the pre- and postsynaptic membranes. Interacts with the spider omega-agatoxin-IVA (AC P30288). Interacts with TSPOAP1. Brain specific. Purkinje cells contain predominantly P-type VSCC, the Q-type being a prominent calcium current in cerebellar granule cells. Also found in heart, in kidney distal convoluted tubule (DCT), and in pituitary.

It localises to the cell membrane. The catalysed reaction is Ca(2+)(in) = Ca(2+)(out). Its function is as follows. Voltage-sensitive calcium channels (VSCC) mediate the entry of calcium ions into excitable cells and are also involved in a variety of calcium-dependent processes, including muscle contraction, hormone or neurotransmitter release, gene expression, cell motility, cell division and cell death. The isoform alpha-1A gives rise to P and/or Q-type calcium currents. P/Q-type calcium channels belong to the 'high-voltage activated' (HVA) group and are specifically blocked by the spider omega-agatoxin-IVA (AC P30288). They are however insensitive to dihydropyridines (DHP). This chain is Voltage-dependent P/Q-type calcium channel subunit alpha-1A, found in Rattus norvegicus (Rat).